A 284-amino-acid chain; its full sequence is Shikimate dehydrogenase (NADP(+)) (284 aa).

Shikimate-binding positions include 20 to 22 (SIS) and S67. Catalysis depends on K71, which acts as the Proton acceptor. Residue D83 coordinates NADP(+). Shikimate contacts are provided by N92 and D107. NADP(+) contacts are provided by residues 129–133 (GAGGA) and I227. Residue Y229 participates in shikimate binding. NADP(+) is bound at residue G250.

The protein belongs to the shikimate dehydrogenase family. Homodimer.

It carries out the reaction shikimate + NADP(+) = 3-dehydroshikimate + NADPH + H(+). It participates in metabolic intermediate biosynthesis; chorismate biosynthesis; chorismate from D-erythrose 4-phosphate and phosphoenolpyruvate: step 4/7. Functionally, involved in the biosynthesis of the chorismate, which leads to the biosynthesis of aromatic amino acids. Catalyzes the reversible NADPH linked reduction of 3-dehydroshikimate (DHSA) to yield shikimate (SA). The protein is Shikimate dehydrogenase (NADP(+)) of Streptococcus pneumoniae (strain Taiwan19F-14).